A 389-amino-acid chain; its full sequence is Cytochrome f (389 aa).

Positions 1–42 (MTTFFISKVNGPVNKSLIWLKIHIYEFFLLKFMLLFPPTVCS) are cleaved as a signal peptide. 4 residues coordinate heme: Tyr-105, Cys-125, Cys-128, and His-129. The helical transmembrane segment at 355 to 375 (LQALIVFFIFVILTQLFLVLK) threads the bilayer.

This sequence belongs to the cytochrome f family. In terms of assembly, the 4 large subunits of the cytochrome b6-f complex are cytochrome b6, subunit IV (17 kDa polypeptide, petD), cytochrome f and the Rieske protein, while the 4 small subunits are PetG, PetL, PetM and PetN. The complex functions as a dimer. Heme is required as a cofactor.

The protein localises to the plastid. It localises to the chloroplast thylakoid membrane. Functionally, component of the cytochrome b6-f complex, which mediates electron transfer between photosystem II (PSII) and photosystem I (PSI), cyclic electron flow around PSI, and state transitions. This Pleurastrum terricola (Filamentous green alga) protein is Cytochrome f.